The sequence spans 428 residues: Transcription factor Sp7 (428 aa).

The tract at residues 30–84 is disordered; it reads SSPLRDSTTLGKGGTKKPYADLSAPKTMGDAYPAPFSSTNGLLSPAGSPPAPASG. An N6-propionyllysine mark is found at lysine 41 and lysine 45. Residue lysine 55 forms a Glycyl lysine isopeptide (Lys-Gly) (interchain with G-Cter in ubiquitin) linkage. Positions 153–161 match the 9aaTAD motif; that stretch reads TPWWDMHPG. A Glycyl lysine isopeptide (Lys-Gly) (interchain with G-Cter in ubiquitin) cross-link involves residue lysine 227. Residues 229–257 are disordered; the sequence is KAVGNSGQLEGSGAAKPPRGAGTGGSGGY. C2H2-type zinc fingers lie at residues 291–315, 321–345, and 351–373; these read HSCH…LRWH, FVCN…VRTH, and FTCL…QRTH. 2 positions are modified to N6-propionyllysine: lysine 358 and lysine 368. Residues 364–428 are disordered; that stretch reads DHLSKHQRTH…SPEQSNLLEI (65 aa).

It belongs to the Sp1 C2H2-type zinc-finger protein family. In terms of assembly, interacts with RIOX1; the interaction is direct and inhibits transcription activator activity. Post-translationally, propionylated. Depropionylation at Lys-368 by SIRT7 activates transcription factor activity and positively regulates bone formation by osteoblasts. In terms of processing, ubiquitination at leads to proteasomal degradation. SP7 is a short-live protein with an endogenous half-life of approximately 12 hours. As to expression, osteoblast/chondrocyte specific.

It is found in the nucleus. Transcriptional activator essential for osteoblast differentiation. Binds to SP1 and EKLF consensus sequences and to other G/C-rich sequences. The sequence is that of Transcription factor Sp7 (Sp7) from Mus musculus (Mouse).